Consider the following 112-residue polypeptide: ATP synthase epsilon chain (112 aa).

It belongs to the ATPase epsilon chain family. In terms of assembly, F-type ATPases have 2 components, CF(1) - the catalytic core - and CF(0) - the membrane proton channel. CF(1) has five subunits: alpha(3), beta(3), gamma(1), delta(1), epsilon(1). CF(0) has three main subunits: a, b and c.

The protein resides in the cell inner membrane. In terms of biological role, produces ATP from ADP in the presence of a proton gradient across the membrane. The chain is ATP synthase epsilon chain (atpC) from Rickettsia prowazekii (strain Madrid E).